The chain runs to 609 residues: Phosphoenolpyruvate carboxykinase [GTP] (609 aa).

Substrate is bound by residues arginine 81 and 220–222 (YGG). Residues lysine 229 and histidine 249 each contribute to the Mn(2+) site. Serine 271 contributes to the substrate binding site. GTP is bound at residue 272–277 (ACGKTN). The active site involves cysteine 273. Aspartate 296 serves as a coordination point for Mn(2+). Substrate is bound at residue 387–389 (NSR). GTP is bound by residues arginine 389, arginine 420, and 515-518 (FGEN).

This sequence belongs to the phosphoenolpyruvate carboxykinase [GTP] family. As to quaternary structure, monomer. Requires Mn(2+) as cofactor.

It is found in the cytoplasm. The catalysed reaction is oxaloacetate + GTP = phosphoenolpyruvate + GDP + CO2. Its pathway is carbohydrate biosynthesis; gluconeogenesis. Functionally, catalyzes the conversion of oxaloacetate (OAA) to phosphoenolpyruvate (PEP), the rate-limiting step in the metabolic pathway that produces glucose from lactate and other precursors derived from the citric acid cycle. This is Phosphoenolpyruvate carboxykinase [GTP] from Mycobacterium marinum (strain ATCC BAA-535 / M).